A 361-amino-acid polypeptide reads, in one-letter code: CRISPR system associated protein Cas8 (361 aa).

Monomer. Can form a Cascade complex with Csa5, Cas7, Cas5a, Cas3 and Cas3'.

In terms of biological role, CRISPR (clustered regularly interspaced short palindromic repeat) is an adaptive immune system that provides protection against mobile genetic elements (viruses, transposable elements and conjugative plasmids). CRISPR clusters contain sequences complementary to antecedent mobile elements and target invading nucleic acids. CRISPR clusters are transcribed and processed into CRISPR RNA (crRNA). The chain is CRISPR system associated protein Cas8 (cas8a2) from Thermoproteus tenax (strain ATCC 35583 / DSM 2078 / JCM 9277 / NBRC 100435 / Kra 1).